Reading from the N-terminus, the 672-residue chain is Protein seu-1 (672 aa).

Disordered regions lie at residues 1–463 (MSSI…AGTE) and 576–672 (LAPP…LKHL). Positions 8 to 20 (NDNRRPTFRDHRT) are enriched in basic and acidic residues. Positions 25–34 (GRGGSGGGGR) are enriched in gly residues. Residues 62 to 85 (RSQDHRQRSPEVRRHRSPEKESKD) are compositionally biased toward basic and acidic residues. The segment covering 87 to 105 (VVTSTGSSRGATSASVTSS) has biased composition (low complexity). 4 stretches are compositionally biased toward basic and acidic residues: residues 107–138 (RRHESGERHRETHRREDKEKKPEKSTDRDADR), 189–226 (VSRHSENRRKSSSDVSRRHGDKEKRDRKREDVKKKSNG), 234–268 (RRREEDHKRKSESSRKEKKDEDVKEKVVDENKVED), and 289–306 (EQAKEHGSDEPERPESHQ). Over residues 307-317 (SAHSAAVSNAS) the composition is skewed to low complexity. The span at 322–343 (SEEELDYEEDDIDVDLDGDIDV) shows a compositional bias: acidic residues. Basic and acidic residues-rich tracts occupy residues 366-375 (NDVKDETMEE), 382-396 (PEKKKPRTSENDDKD), 410-424 (RREDDKDRRQSSDHH), 436-447 (RATDHKESRRSE), 607-626 (SFGDRGNRSDEHHGGSRHMD), and 636-659 (DHRVRDDGRRVSSFEDRKRPERGF).

Highly expressed in intestinal cells, lateral hypodermal (seam) cells, Pn.p ventral hypodermal cells, and spermatheca. Expressed at low levels in the ventral nerve cord.

The protein resides in the nucleus. Its function is as follows. Together with unc-5, involved in touch neuron axon guidance. During gonad morphogenesis, plays a role in the unc-5-/unc-6-mediated migration of distal tip cells along the body. This is Protein seu-1 from Caenorhabditis elegans.